The primary structure comprises 192 residues: Ion-translocating oxidoreductase complex subunit A (192 aa).

6 consecutive transmembrane segments (helical) span residues 5 to 25 (LLLL…FLGL), 39 to 59 (IGMS…SFLV), 72 to 92 (LRTM…EMLV), 102 to 122 (ALGI…VALL), 134 to 154 (AIYG…FSAM), and 171 to 191 (AIAM…TGLV).

The protein belongs to the NqrDE/RnfAE family. As to quaternary structure, the complex is composed of six subunits: RnfA, RnfB, RnfC, RnfD, RnfE and RnfG.

The protein localises to the cell inner membrane. Its function is as follows. Part of a membrane-bound complex that couples electron transfer with translocation of ions across the membrane. This Shewanella amazonensis (strain ATCC BAA-1098 / SB2B) protein is Ion-translocating oxidoreductase complex subunit A.